Reading from the N-terminus, the 819-residue chain is Glycine-rich domain-containing protein 1 (819 aa).

Functionally, plays a regulatory role in abscisic acid (ABA) signaling and tolerance to abiotic stress during germination. May be involved in the regulation of the ABI transcriptional factors. This chain is Glycine-rich domain-containing protein 1, found in Arabidopsis thaliana (Mouse-ear cress).